A 314-amino-acid polypeptide reads, in one-letter code: S-methyl-5'-thioadenosine phosphorylase (314 aa).

Phosphate contacts are provided by residues Ser-31, 73 to 74, and 106 to 107; these read RH and SA. Met-207 serves as a coordination point for substrate. Thr-208 lines the phosphate pocket. Substrate is bound at residue 231–233; the sequence is DYD.

This sequence belongs to the PNP/MTAP phosphorylase family. MTAP subfamily. Homohexamer. Dimer of a homotrimer.

The catalysed reaction is S-methyl-5'-thioadenosine + phosphate = 5-(methylsulfanyl)-alpha-D-ribose 1-phosphate + adenine. The protein operates within amino-acid biosynthesis; L-methionine biosynthesis via salvage pathway; S-methyl-5-thio-alpha-D-ribose 1-phosphate from S-methyl-5'-thioadenosine (phosphorylase route): step 1/1. Its function is as follows. Catalyzes the reversible phosphorylation of S-methyl-5'-thioadenosine (MTA) to adenine and 5-methylthioribose-1-phosphate. Involved in the breakdown of MTA, a major by-product of polyamine biosynthesis. Responsible for the first step in the methionine salvage pathway after MTA has been generated from S-adenosylmethionine. Has broad substrate specificity with 6-aminopurine nucleosides as preferred substrates. This chain is S-methyl-5'-thioadenosine phosphorylase, found in Prochlorococcus marinus (strain SARG / CCMP1375 / SS120).